Here is a 303-residue protein sequence, read N- to C-terminus: Elongation factor Ts (303 aa).

Residues 81–84 (TDFV) form an involved in Mg(2+) ion dislocation from EF-Tu region.

This sequence belongs to the EF-Ts family.

Its subcellular location is the cytoplasm. Associates with the EF-Tu.GDP complex and induces the exchange of GDP to GTP. It remains bound to the aminoacyl-tRNA.EF-Tu.GTP complex up to the GTP hydrolysis stage on the ribosome. The sequence is that of Elongation factor Ts from Mesomycoplasma hyopneumoniae (strain 232) (Mycoplasma hyopneumoniae).